Here is a 403-residue protein sequence, read N- to C-terminus: Heparan-sulfate 6-O-sulfotransferase 2 (403 aa).

Residues 1–7 (MEDRSHK) lie on the Cytoplasmic side of the membrane. A helical; Signal-anchor for type II membrane protein transmembrane segment spans residues 8-28 (VLLALVMLFLFAVIVLQYVCP). The Lumenal portion of the chain corresponds to 29–403 (GTECQLLRLR…DYLGNVERWR (375 aa)). Asn64 carries N-linked (GlcNAc...) asparagine glycosylation. A 3'-phosphoadenylyl sulfate-binding site is contributed by 88–96 (HIQKTGGTT). Substrate contacts are provided by residues 118 to 119 (KK), Arg135, Trp140, and His145. The active-site Proton acceptor is His145. The 3'-phosphoadenylyl sulfate site is built by Arg180 and Ser188. Substrate is bound by residues His192 and Trp199. An N-linked (GlcNAc...) asparagine glycan is attached at Asn259. A 3'-phosphoadenylyl sulfate-binding site is contributed by 312–314 (TQY). Asn315 is a glycosylation site (N-linked (GlcNAc...) asparagine). 318–319 (RA) serves as a coordination point for 3'-phosphoadenylyl sulfate. The disordered stretch occupies residues 381-403 (AHLREQGENSSSTDYLGNVERWR). An N-linked (GlcNAc...) asparagine glycan is attached at Asn389.

It belongs to the sulfotransferase 6 family.

It is found in the membrane. It carries out the reaction alpha-D-glucosaminyl-[heparan sulfate](n) + 3'-phosphoadenylyl sulfate = 6-sulfo-alpha-D-glucosaminyl-[heparan sulfate](n) + adenosine 3',5'-bisphosphate + H(+). Functionally, 6-O-sulfation enzyme which catalyzes the transfer of sulfate from 3'-phosphoadenosine 5'-phosphosulfate (PAPS) to position 6 of the N-sulfoglucosamine residue (GlcNS) of heparan sulfate. May also play a role in limb development. The sequence is that of Heparan-sulfate 6-O-sulfotransferase 2 (HS6ST2) from Gallus gallus (Chicken).